Here is a 551-residue protein sequence, read N- to C-terminus: Malate synthase, glyoxysomal (551 aa).

The active-site Proton acceptor is the R174. D458 (proton donor) is an active-site residue.

It belongs to the malate synthase family.

Its subcellular location is the glyoxysome. The enzyme catalyses glyoxylate + acetyl-CoA + H2O = (S)-malate + CoA + H(+). It participates in carbohydrate metabolism; glyoxylate cycle; (S)-malate from isocitrate: step 2/2. This is Malate synthase, glyoxysomal (PMS1) from Candida tropicalis (Yeast).